The following is a 251-amino-acid chain: Ubiquinone/menaquinone biosynthesis C-methyltransferase UbiE (251 aa).

Residues Thr-74, Asp-95, 123–124 (NA), and Ser-140 each bind S-adenosyl-L-methionine.

Belongs to the class I-like SAM-binding methyltransferase superfamily. MenG/UbiE family.

The catalysed reaction is a 2-demethylmenaquinol + S-adenosyl-L-methionine = a menaquinol + S-adenosyl-L-homocysteine + H(+). It catalyses the reaction a 2-methoxy-6-(all-trans-polyprenyl)benzene-1,4-diol + S-adenosyl-L-methionine = a 5-methoxy-2-methyl-3-(all-trans-polyprenyl)benzene-1,4-diol + S-adenosyl-L-homocysteine + H(+). Its pathway is quinol/quinone metabolism; menaquinone biosynthesis; menaquinol from 1,4-dihydroxy-2-naphthoate: step 2/2. It participates in cofactor biosynthesis; ubiquinone biosynthesis. Functionally, methyltransferase required for the conversion of demethylmenaquinol (DMKH2) to menaquinol (MKH2) and the conversion of 2-polyprenyl-6-methoxy-1,4-benzoquinol (DDMQH2) to 2-polyprenyl-3-methyl-6-methoxy-1,4-benzoquinol (DMQH2). This chain is Ubiquinone/menaquinone biosynthesis C-methyltransferase UbiE, found in Klebsiella pneumoniae subsp. pneumoniae (strain ATCC 700721 / MGH 78578).